The following is a 777-amino-acid chain: CRISPR system single-strand-specific deoxyribonuclease Cas10/Csm1 (subtype III-A) (777 aa).

An HD domain is found at 1 to 106 (MEIDELTALG…VYEADNLASG (106 aa)). The GGDEF domain maps to 513-660 (RRLGVMKGDV…GRNRVFVVGR (148 aa)).

Belongs to the CRISPR-associated Cas10/Csm1 family. As to quaternary structure, probably part of the Csm effector complex, that includes Cas10, Csm2, Csm3, Csm4, Csm5 and mature crRNA. Will form a homodimer in solution, interacts with Csm4, which is a tighter, better association than the homodimeric Cas10 and uses the same interface for interaction. A divalent metal cation serves as cofactor.

With respect to regulation, ssDNase activity is inhibited by EDTA. CRISPR (clustered regularly interspaced short palindromic repeat) is an adaptive immune system that provides protection against mobile genetic elements (viruses, transposable elements and conjugative plasmids). CRISPR clusters contain spacers, sequences complementary to antecedent mobile elements, and target invading nucleic acids. CRISPR clusters are transcribed and processed into CRISPR RNA (crRNA). The type III-A Csm effector complex binds crRNA and acts as a crRNA-guided RNase, DNase and cyclic oligoadenylate synthase; binding of target RNA cognate to the crRNA is required for all activities. Functionally, a single-strand deoxyribonuclease (ssDNase) which digests linear and circular ssDNA; has 5'-3' and 3'-5' exonuclease activity as well as a less efficient endonuclease activity. Has a minimal size requirement; 100 nucleotide ssDNA (nt) is more efficiently digested than 50 or 25 nt ssDNA, while 14 nt ssDNA is not cleaved at all. It has no activity on dsDNA or ssRNA. In terms of biological role, ssDNase activity is stimulated in the ternary Csm effector complex; binding of cognate target RNA activates the ssDNase, as the target RNA is degraded ssDNA activity decreases. Its function is as follows. When associated with the ternary Csm effector complex (the crRNA, Cas proteins and a cognate target ssRNA) synthesizes cyclic oligoadenylates (cOA) from ATP. cOAs are second messengers that stimulate the ssRNase activity of Csm6, inducing an antiviral state important for defense against invading nucleic acids. This chain is CRISPR system single-strand-specific deoxyribonuclease Cas10/Csm1 (subtype III-A), found in Thermococcus onnurineus (strain NA1).